Reading from the N-terminus, the 219-residue chain is PRELI domain-containing protein 1, mitochondrial (219 aa).

In terms of domain architecture, PRELI/MSF1 spans 36 to 174 (TEDIVHREVT…ILAKLQGEAP (139 aa)).

Forms a complex with TRIAP1 in the mitochondrion intermembrane space. Interacts with OPA1 and AIFM1. In terms of tissue distribution, highly expressed in fetal liver; less expressed in fetal brain, lung, and kidney. At the adult stage, expression is drastically reduced in the liver but highly expressed in the spleen, brain, lung, lymph nodes and peripheral blood leukocytes.

The protein localises to the mitochondrion. The protein resides in the mitochondrion intermembrane space. It carries out the reaction a 1,2-diacyl-sn-glycero-3-phosphate(in) = a 1,2-diacyl-sn-glycero-3-phosphate(out). In terms of biological role, involved in the modulation of the mitochondrial apoptotic pathway by ensuring the accumulation of cardiolipin (CL) in mitochondrial membranes. In vitro, the TRIAP1:PRELID1 complex mediates the transfer of phosphatidic acid (PA) between liposomes and probably functions as a PA transporter across the mitochondrion intermembrane space to provide PA for CL synthesis in the inner membrane. Regulates the mitochondrial apoptotic pathway in primary Th cells. Regulates Th cell differentiation by down-regulating STAT6 thereby reducing IL-4-induced Th2 cell number. May be important for the development of vital and immunocompetent organs. This chain is PRELI domain-containing protein 1, mitochondrial (PRELID1), found in Homo sapiens (Human).